The chain runs to 394 residues: Elongation factor Tu (394 aa).

Positions 10-204 (KPHLNVGTIG…ALDTYIPLPE (195 aa)) constitute a tr-type G domain. A G1 region spans residues 19–26 (GHVDHGKT). 19–26 (GHVDHGKT) lines the GTP pocket. Threonine 26 is a Mg(2+) binding site. The interval 60-64 (GITIN) is G2. Residues 81–84 (DCPG) form a G3 region. GTP contacts are provided by residues 81 to 85 (DCPGH) and 136 to 139 (NKCD). The segment at 136–139 (NKCD) is G4. Positions 174-176 (SAL) are G5.

It belongs to the TRAFAC class translation factor GTPase superfamily. Classic translation factor GTPase family. EF-Tu/EF-1A subfamily. Monomer.

The protein resides in the cytoplasm. It carries out the reaction GTP + H2O = GDP + phosphate + H(+). GTP hydrolase that promotes the GTP-dependent binding of aminoacyl-tRNA to the A-site of ribosomes during protein biosynthesis. The protein is Elongation factor Tu of Psychromonas ingrahamii (strain DSM 17664 / CCUG 51855 / 37).